A 301-amino-acid polypeptide reads, in one-letter code: ATP synthase subunit gamma, mitochondrial (301 aa).

This sequence belongs to the ATPase gamma chain family. F-type ATPases have 2 components, CF(1) - the catalytic core - and CF(0) - the membrane proton channel. CF(1) has five subunits: alpha(3), beta(3), gamma(1), delta(1), epsilon(1). CF(0) has three main subunits: a, b and c.

It localises to the mitochondrion. Its subcellular location is the mitochondrion inner membrane. Functionally, mitochondrial membrane ATP synthase (F(1)F(0) ATP synthase or Complex V) produces ATP from ADP in the presence of a proton gradient across the membrane which is generated by electron transport complexes of the respiratory chain. F-type ATPases consist of two structural domains, F(1) - containing the extramembraneous catalytic core, and F(0) - containing the membrane proton channel, linked together by a central stalk and a peripheral stalk. During catalysis, ATP synthesis in the catalytic domain of F(1) is coupled via a rotary mechanism of the central stalk subunits to proton translocation. Part of the complex F(1) domain and the central stalk which is part of the complex rotary element. The gamma subunit protrudes into the catalytic domain formed of alpha(3)beta(3). Rotation of the central stalk against the surrounding alpha(3)beta(3) subunits leads to hydrolysis of ATP in three separate catalytic sites on the beta subunits. This is ATP synthase subunit gamma, mitochondrial (atp3) from Schizosaccharomyces pombe (strain 972 / ATCC 24843) (Fission yeast).